A 255-amino-acid polypeptide reads, in one-letter code: Hydroxyacylglutathione hydrolase (255 aa).

Positions 53, 55, 57, 58, 110, 127, and 165 each coordinate Zn(2+).

It belongs to the metallo-beta-lactamase superfamily. Glyoxalase II family. In terms of assembly, monomer. The cofactor is Zn(2+).

The enzyme catalyses an S-(2-hydroxyacyl)glutathione + H2O = a 2-hydroxy carboxylate + glutathione + H(+). Its pathway is secondary metabolite metabolism; methylglyoxal degradation; (R)-lactate from methylglyoxal: step 2/2. Its function is as follows. Thiolesterase that catalyzes the hydrolysis of S-D-lactoyl-glutathione to form glutathione and D-lactic acid. This Xanthomonas euvesicatoria pv. vesicatoria (strain 85-10) (Xanthomonas campestris pv. vesicatoria) protein is Hydroxyacylglutathione hydrolase.